Reading from the N-terminus, the 698-residue chain is Elongation factor G (698 aa).

Residues 8–290 (ERYRNIGISA…AVIEFLPSPV (283 aa)) enclose the tr-type G domain. GTP contacts are provided by residues 17 to 24 (AHIDAGKT), 88 to 92 (DTPGH), and 142 to 145 (NKMD).

It belongs to the TRAFAC class translation factor GTPase superfamily. Classic translation factor GTPase family. EF-G/EF-2 subfamily.

Its subcellular location is the cytoplasm. Its function is as follows. Catalyzes the GTP-dependent ribosomal translocation step during translation elongation. During this step, the ribosome changes from the pre-translocational (PRE) to the post-translocational (POST) state as the newly formed A-site-bound peptidyl-tRNA and P-site-bound deacylated tRNA move to the P and E sites, respectively. Catalyzes the coordinated movement of the two tRNA molecules, the mRNA and conformational changes in the ribosome. This chain is Elongation factor G, found in Azoarcus sp. (strain BH72).